The following is a 909-amino-acid chain: uncharacterized protein (909 aa).

This is an uncharacterized protein from Sinorhizobium fredii (strain NBRC 101917 / NGR234).